We begin with the raw amino-acid sequence, 866 residues long: Protein translocase subunit SecA (866 aa).

ATP-binding positions include Gln-87, 105–109 (GEGKT), and Asp-514. The interval 819–858 (VSPIGTPSSEGGGETSGADTYSNKKIGRNDPCPCGSGKKY) is disordered. Residues Cys-850, Cys-852, Cys-861, and Cys-862 each coordinate Zn(2+).

It belongs to the SecA family. As to quaternary structure, monomer and homodimer. Part of the essential Sec protein translocation apparatus which comprises SecA, SecYEG and auxiliary proteins SecDF. Other proteins may also be involved. Requires Zn(2+) as cofactor.

The protein localises to the cell inner membrane. It is found in the cytoplasm. The enzyme catalyses ATP + H2O + cellular proteinSide 1 = ADP + phosphate + cellular proteinSide 2.. Functionally, part of the Sec protein translocase complex. Interacts with the SecYEG preprotein conducting channel. Has a central role in coupling the hydrolysis of ATP to the transfer of proteins into and across the cell membrane, serving as an ATP-driven molecular motor driving the stepwise translocation of polypeptide chains across the membrane. The chain is Protein translocase subunit SecA from Elusimicrobium minutum (strain Pei191).